A 157-amino-acid chain; its full sequence is Protein BeeE (157 aa).

It belongs to the phage portal family.

The protein is Protein BeeE (beeE) of Escherichia coli (strain K12).